Consider the following 120-residue polypeptide: Succinate dehydrogenase membrane anchor subunit (120 aa).

Residues 1-17 lie on the Mitochondrial matrix side of the membrane; it reads MTEKLLHFIRTKSGSMH. The chain crosses the membrane as a helical span at residues 18–38; that stretch reads WWLQRFLAILLAPIILYLLFD. Residues 39–63 are Mitochondrial intermembrane-facing; it reads VAIYIGQQSDPTVMMFLNRIFNHNS. Residues 64-85 traverse the membrane as a helical segment; the sequence is IFIFITSVILIWHVRGGMEVII. Residue H76 participates in heme binding. Residues 86–95 are Mitochondrial matrix-facing; the sequence is EDYVHGEKTR. Y88 is an a ubiquinone binding site. The helical transmembrane segment at 96 to 120 threads the bilayer; it reads IVSIFLIRVIAIEIMEYLYKCSIIF.

As to quaternary structure, part of an enzyme complex containing four subunits: a flavoprotein, an iron-sulfur protein, plus two membrane-anchoring proteins. Heme serves as cofactor.

The protein resides in the mitochondrion inner membrane. Its pathway is carbohydrate metabolism; tricarboxylic acid cycle. In terms of biological role, membrane-anchoring subunit of succinate dehydrogenase (SDH). This Reclinomonas americana protein is Succinate dehydrogenase membrane anchor subunit (SDH4).